A 274-amino-acid chain; its full sequence is Ethanolamine ammonia-lyase small subunit (274 aa).

Residues Val161, Glu182, and Cys211 each coordinate adenosylcob(III)alamin.

Belongs to the EutC family. As to quaternary structure, the basic unit is a heterodimer which dimerizes to form tetramers. The heterotetramers trimerize; 6 large subunits form a core ring with 6 small subunits projecting outwards. Requires adenosylcob(III)alamin as cofactor.

The protein localises to the bacterial microcompartment. It catalyses the reaction ethanolamine = acetaldehyde + NH4(+). It participates in amine and polyamine degradation; ethanolamine degradation. Functionally, catalyzes the deamination of various vicinal amino-alcohols to oxo compounds. Allows this organism to utilize ethanolamine as the sole source of nitrogen and carbon in the presence of external vitamin B12. The chain is Ethanolamine ammonia-lyase small subunit from Pseudomonas fluorescens (strain Pf0-1).